The sequence spans 506 residues: 2-isopropylmalate synthase (506 aa).

The region spanning 4-266 (ILFMDTTLRD…EPSMTLKEIK (263 aa)) is the Pyruvate carboxyltransferase domain. Positions 13, 201, 203, and 237 each coordinate Mn(2+). The segment at 390-506 (NITQLQVHFV…KLKSFIQLVK (117 aa)) is regulatory domain.

This sequence belongs to the alpha-IPM synthase/homocitrate synthase family. LeuA type 1 subfamily. Homodimer. The cofactor is Mn(2+).

Its subcellular location is the cytoplasm. The enzyme catalyses 3-methyl-2-oxobutanoate + acetyl-CoA + H2O = (2S)-2-isopropylmalate + CoA + H(+). It functions in the pathway amino-acid biosynthesis; L-leucine biosynthesis; L-leucine from 3-methyl-2-oxobutanoate: step 1/4. Catalyzes the condensation of the acetyl group of acetyl-CoA with 3-methyl-2-oxobutanoate (2-ketoisovalerate) to form 3-carboxy-3-hydroxy-4-methylpentanoate (2-isopropylmalate). The chain is 2-isopropylmalate synthase from Bacillus cereus (strain 03BB102).